The sequence spans 227 residues: ATP synthase F(0) complex subunit a (227 aa).

6 helical membrane-spanning segments follow: residues 14–34 (YLGIPLIAIAIALPWVLFPLP), 69–89 (WALLLASLMVFLITINMLGLL), 98–118 (QLSLNMGLAIPLWLATVIIGL), 132–152 (EGTPLPLIPVLIIIETISLFI), 179–199 (VFVLLPMMPTVAILTATVLFL), and 202–222 (LLEVAVAMIQAYVFVLLLSLY).

It belongs to the ATPase A chain family. In terms of assembly, component of the ATP synthase complex composed at least of ATP5F1A/subunit alpha, ATP5F1B/subunit beta, ATP5MC1/subunit c (homooctomer), MT-ATP6/subunit a, MT-ATP8/subunit 8, ATP5ME/subunit e, ATP5MF/subunit f, ATP5MG/subunit g, ATP5MK/subunit k, ATP5MJ/subunit j, ATP5F1C/subunit gamma, ATP5F1D/subunit delta, ATP5F1E/subunit epsilon, ATP5PF/subunit F6, ATP5PB/subunit b, ATP5PD/subunit d, ATP5PO/subunit OSCP. ATP synthase complex consists of a soluble F(1) head domain (subunits alpha(3) and beta(3)) - the catalytic core - and a membrane F(0) domain - the membrane proton channel (subunits c, a, 8, e, f, g, k and j). These two domains are linked by a central stalk (subunits gamma, delta, and epsilon) rotating inside the F1 region and a stationary peripheral stalk (subunits F6, b, d, and OSCP). Interacts with DNAJC30; interaction is direct.

Its subcellular location is the mitochondrion inner membrane. It carries out the reaction H(+)(in) = H(+)(out). In terms of biological role, subunit a, of the mitochondrial membrane ATP synthase complex (F(1)F(0) ATP synthase or Complex V) that produces ATP from ADP in the presence of a proton gradient across the membrane which is generated by electron transport complexes of the respiratory chain. ATP synthase complex consist of a soluble F(1) head domain - the catalytic core - and a membrane F(1) domain - the membrane proton channel. These two domains are linked by a central stalk rotating inside the F(1) region and a stationary peripheral stalk. During catalysis, ATP synthesis in the catalytic domain of F(1) is coupled via a rotary mechanism of the central stalk subunits to proton translocation. With the subunit c (ATP5MC1), forms the proton-conducting channel in the F(0) domain, that contains two crucial half-channels (inlet and outlet) that facilitate proton movement from the mitochondrial intermembrane space (IMS) into the matrix. Protons are taken up via the inlet half-channel and released through the outlet half-channel, following a Grotthuss mechanism. This Formosania lacustris (Oriental stream loach) protein is ATP synthase F(0) complex subunit a.